Here is a 577-residue protein sequence, read N- to C-terminus: Urease subunit alpha (577 aa).

The Urease domain maps to 136-577; sequence GAIDCHVHLI…LPMAQRYFLF (442 aa). Positions 141, 143, and 224 each coordinate Ni(2+). Lysine 224 is subject to N6-carboxylysine. Histidine 226 is a substrate binding site. Residues histidine 253 and histidine 279 each coordinate Ni(2+). Histidine 327 (proton donor) is an active-site residue. Residue aspartate 367 coordinates Ni(2+).

The protein belongs to the metallo-dependent hydrolases superfamily. Urease alpha subunit family. In terms of assembly, heterotrimer of UreA (gamma), UreB (beta) and UreC (alpha) subunits. Three heterotrimers associate to form the active enzyme. Requires Ni cation as cofactor. Carboxylation allows a single lysine to coordinate two nickel ions.

The protein resides in the cytoplasm. The enzyme catalyses urea + 2 H2O + H(+) = hydrogencarbonate + 2 NH4(+). It functions in the pathway nitrogen metabolism; urea degradation; CO(2) and NH(3) from urea (urease route): step 1/1. In Mycobacterium marinum (strain ATCC BAA-535 / M), this protein is Urease subunit alpha.